The primary structure comprises 43 residues: MTVAQVFVVGILVALVLITAFAVYTAFGPPSKKLADPFEMHED.

The chain crosses the membrane as a helical span at residues 7–27 (FVVGILVALVLITAFAVYTAF).

Belongs to the PsbN family.

Its subcellular location is the cell inner membrane. Its function is as follows. May play a role in photosystem I and II biogenesis. In Gloeobacter violaceus (strain ATCC 29082 / PCC 7421), this protein is Protein PsbN.